We begin with the raw amino-acid sequence, 737 residues long: UPF0507 protein YML002W (737 aa).

Positions 1–83 constitute a VPS9 domain; that stretch reads MDSHQLELPD…FEDFNKNTGN (83 aa).

Belongs to the UPF0507 family.

The protein is UPF0507 protein YML002W of Saccharomyces cerevisiae (strain ATCC 204508 / S288c) (Baker's yeast).